A 189-amino-acid polypeptide reads, in one-letter code: MKKSLSLVLASGSPRRKELLAQLGYDFDIVLPDIEEAKQADEQAQDYVLRLSLEKAQAGLALAKPDSVVLGSDTVVVCDDRVLEKPKSFEDSKRMLTDLSGRRHQVMTAVSVVSSEQQHSVVVTTDVWFKPLTHEEIEQYWQSGEPCDKAGSYGIQGLGGRFVTRIEGSYHAVVGLPLFETDQLIQEFL.

The active-site Proton acceptor is aspartate 73.

This sequence belongs to the Maf family. YhdE subfamily. A divalent metal cation serves as cofactor.

The protein resides in the cytoplasm. It catalyses the reaction dTTP + H2O = dTMP + diphosphate + H(+). The enzyme catalyses UTP + H2O = UMP + diphosphate + H(+). Its function is as follows. Nucleoside triphosphate pyrophosphatase that hydrolyzes dTTP and UTP. May have a dual role in cell division arrest and in preventing the incorporation of modified nucleotides into cellular nucleic acids. This is dTTP/UTP pyrophosphatase from Vibrio parahaemolyticus serotype O3:K6 (strain RIMD 2210633).